The primary structure comprises 573 residues: DNA ligase (573 aa).

E250 lines the ATP pocket. K252 acts as the N6-AMP-lysine intermediate in catalysis. The ATP site is built by R257, R272, E301, F342, R432, and K438.

The protein belongs to the ATP-dependent DNA ligase family. Mg(2+) is required as a cofactor.

It catalyses the reaction ATP + (deoxyribonucleotide)n-3'-hydroxyl + 5'-phospho-(deoxyribonucleotide)m = (deoxyribonucleotide)n+m + AMP + diphosphate.. Its function is as follows. DNA ligase that seals nicks in double-stranded DNA during DNA replication, DNA recombination and DNA repair. In Methanococcus maripaludis (strain C5 / ATCC BAA-1333), this protein is DNA ligase.